Here is a 345-residue protein sequence, read N- to C-terminus: Tetraacyldisaccharide 4'-kinase (345 aa).

51–58 (HVGGAGKT) contacts ATP.

It belongs to the LpxK family.

It catalyses the reaction a lipid A disaccharide + ATP = a lipid IVA + ADP + H(+). It participates in glycolipid biosynthesis; lipid IV(A) biosynthesis; lipid IV(A) from (3R)-3-hydroxytetradecanoyl-[acyl-carrier-protein] and UDP-N-acetyl-alpha-D-glucosamine: step 6/6. In terms of biological role, transfers the gamma-phosphate of ATP to the 4'-position of a tetraacyldisaccharide 1-phosphate intermediate (termed DS-1-P) to form tetraacyldisaccharide 1,4'-bis-phosphate (lipid IVA). The polypeptide is Tetraacyldisaccharide 4'-kinase (Bradyrhizobium sp. (strain BTAi1 / ATCC BAA-1182)).